We begin with the raw amino-acid sequence, 883 residues long: Coatomer subunit gamma (883 aa).

Residues 1–25 (MNYFSLTSHKKHRGHPSAGPSNAYQ) form a disordered region. HEAT repeat units follow at residues 69–106 (REAT…IAED), 292–329 (RMLS…THPA), 331–364 (VTTC…GAES), 365–401 (SVER…KYPR), 404–439 (TVLM…ENAD), and 476–513 (ATPS…SCPA).

The protein belongs to the COPG family. Oligomeric complex that consists of at least the alpha, beta, beta', gamma, delta, epsilon and zeta subunits. Expressed in ovary, testis, testis tip, young spermatocytes, germ cells and follicle cells. Up-regulated expression within centrally to posteriorly located germarial cysts and in migrating follicle cells. Widespread expression in imaginal disks including eye-antennal disk, wing disk, third leg and haltere disk.

The protein localises to the cytoplasm. The protein resides in the golgi apparatus membrane. It localises to the cytoplasmic vesicle. It is found in the COPI-coated vesicle membrane. Its subcellular location is the endoplasmic reticulum. Its function is as follows. The coatomer is a cytosolic protein complex that binds to dilysine motifs and reversibly associates with Golgi non-clathrin-coated vesicles, which further mediate biosynthetic protein transport from the ER, via the Golgi up to the trans Golgi network. Coatomer complex is required for budding from Golgi membranes, and is essential for the retrograde Golgi-to-ER transport of dilysine-tagged proteins. Required for limiting lipid storage in lipid droplets. Involved in the expansion of luminal extracellular matrices and apical membrane during tubulogenesis. Required in the tracheal epithelium for luminal protein secretion and diametric tube growth. In salivary glands, required for deposition of O-glycans and luminal extracellular matrix assembly. Required for epidermal morphogenesis and cuticle development. In Drosophila melanogaster (Fruit fly), this protein is Coatomer subunit gamma.